The chain runs to 734 residues: Photosystem I P700 chlorophyll a apoprotein A2 (734 aa).

The next 8 helical transmembrane spans lie at isoleucine 46–alanine 69, leucine 135–glutamine 158, leucine 175–isoleucine 199, isoleucine 273–tyrosine 291, leucine 330–tyrosine 353, alanine 369–isoleucine 395, alanine 417–histidine 439, and phenylalanine 517–valine 535. [4Fe-4S] cluster is bound by residues cysteine 559 and cysteine 568. The next 2 helical transmembrane spans lie at alanine 575–tryptophan 596 and leucine 643–isoleucine 665. Chlorophyll a-binding residues include histidine 654, methionine 662, and tyrosine 670. Tryptophan 671 is a phylloquinone binding site. A helical membrane pass occupies residues leucine 707–alanine 727.

The protein belongs to the PsaA/PsaB family. The PsaA/B heterodimer binds the P700 chlorophyll special pair and subsequent electron acceptors. PSI consists of a core antenna complex that captures photons, and an electron transfer chain that converts photonic excitation into a charge separation. The eukaryotic PSI reaction center is composed of at least 11 subunits. P700 is a chlorophyll a/chlorophyll a' dimer, A0 is one or more chlorophyll a, A1 is one or both phylloquinones and FX is a shared 4Fe-4S iron-sulfur center. serves as cofactor.

Its subcellular location is the plastid. It localises to the chloroplast thylakoid membrane. It catalyses the reaction reduced [plastocyanin] + hnu + oxidized [2Fe-2S]-[ferredoxin] = oxidized [plastocyanin] + reduced [2Fe-2S]-[ferredoxin]. PsaA and PsaB bind P700, the primary electron donor of photosystem I (PSI), as well as the electron acceptors A0, A1 and FX. PSI is a plastocyanin-ferredoxin oxidoreductase, converting photonic excitation into a charge separation, which transfers an electron from the donor P700 chlorophyll pair to the spectroscopically characterized acceptors A0, A1, FX, FA and FB in turn. Oxidized P700 is reduced on the lumenal side of the thylakoid membrane by plastocyanin. The polypeptide is Photosystem I P700 chlorophyll a apoprotein A2 (Angiopteris evecta (Mule's foot fern)).